A 252-amino-acid polypeptide reads, in one-letter code: Ribosomal RNA small subunit methyltransferase J (252 aa).

S-adenosyl-L-methionine contacts are provided by residues 104 to 105, 120 to 121, and Asp-174; these read RD and ER.

Belongs to the methyltransferase superfamily. RsmJ family.

It is found in the cytoplasm. It carries out the reaction guanosine(1516) in 16S rRNA + S-adenosyl-L-methionine = N(2)-methylguanosine(1516) in 16S rRNA + S-adenosyl-L-homocysteine + H(+). Functionally, specifically methylates the guanosine in position 1516 of 16S rRNA. In Mannheimia succiniciproducens (strain KCTC 0769BP / MBEL55E), this protein is Ribosomal RNA small subunit methyltransferase J.